The primary structure comprises 489 residues: UDP-N-acetylmuramoyl-L-alanyl-D-glutamate--2,6-diaminopimelate ligase (489 aa).

Residue serine 30 coordinates UDP-N-acetyl-alpha-D-muramoyl-L-alanyl-D-glutamate. ATP is bound at residue 113–119; that stretch reads GTNGKTS. Residues 155–156, serine 182, glutamine 188, and arginine 190 contribute to the UDP-N-acetyl-alpha-D-muramoyl-L-alanyl-D-glutamate site; that span reads TT. Lysine 222 carries the post-translational modification N6-carboxylysine. Meso-2,6-diaminopimelate is bound by residues arginine 388, 412–415, glycine 463, and glutamate 467; that span reads DNPR. The short motif at 412-415 is the Meso-diaminopimelate recognition motif element; it reads DNPR.

It belongs to the MurCDEF family. MurE subfamily. Requires Mg(2+) as cofactor. Carboxylation is probably crucial for Mg(2+) binding and, consequently, for the gamma-phosphate positioning of ATP.

It localises to the cytoplasm. The catalysed reaction is UDP-N-acetyl-alpha-D-muramoyl-L-alanyl-D-glutamate + meso-2,6-diaminopimelate + ATP = UDP-N-acetyl-alpha-D-muramoyl-L-alanyl-gamma-D-glutamyl-meso-2,6-diaminopimelate + ADP + phosphate + H(+). It functions in the pathway cell wall biogenesis; peptidoglycan biosynthesis. Functionally, catalyzes the addition of meso-diaminopimelic acid to the nucleotide precursor UDP-N-acetylmuramoyl-L-alanyl-D-glutamate (UMAG) in the biosynthesis of bacterial cell-wall peptidoglycan. This Coxiella burnetii (strain RSA 493 / Nine Mile phase I) protein is UDP-N-acetylmuramoyl-L-alanyl-D-glutamate--2,6-diaminopimelate ligase.